A 372-amino-acid polypeptide reads, in one-letter code: MTVLKTTPLHAAHRALNARMVDFGGWDMPVNYGSQIEEHQAVRTDAGMFDVSHMCVVDFTGPRVRAFFEHAIANNVAKLQTPGKALYSCLLNPQGGVIDDLIVYYFTEEFFRVVVNAGTAEKDIAWFNQLNEQGGFGLTIAPRRDFAIVAAQGPNARAKVWDTVPCARAATSELKPFNAAQVAGTPFGDLTVARTGYTGEDGFEIIVPATHVEALWNALAERGVRPCGLGARDTLRLEAGMNLYGQDMDESVSPLDAGLAWTVDLSAPRAFVGRDALEAHGSRAAFVGLILQKENGRAGGVLRAHQKVATPHGEGEITSGTFSPSMQESIAFARVPKDVAIGDTVHVQIRDKQLPARVVKLPFVRNGKVLAA.

This sequence belongs to the GcvT family. In terms of assembly, the glycine cleavage system is composed of four proteins: P, T, L and H.

It catalyses the reaction N(6)-[(R)-S(8)-aminomethyldihydrolipoyl]-L-lysyl-[protein] + (6S)-5,6,7,8-tetrahydrofolate = N(6)-[(R)-dihydrolipoyl]-L-lysyl-[protein] + (6R)-5,10-methylene-5,6,7,8-tetrahydrofolate + NH4(+). Its function is as follows. The glycine cleavage system catalyzes the degradation of glycine. In Burkholderia mallei (strain NCTC 10247), this protein is Aminomethyltransferase.